A 428-amino-acid polypeptide reads, in one-letter code: Hydrolase acrC (428 aa).

The active site involves serine 248.

Belongs to the AB hydrolase superfamily. FUS2 hydrolase family.

It functions in the pathway secondary metabolite biosynthesis. Hydrolase; part of the cluster that mediates the biosynthesis of acurin A, a highly reduced polyketide coupled to a serine via a peptide bond. The activities of the highly reducing polyketide synthase acrA and the nonribosomal peptide synthetase acrB are collectively responsible for the synthesis of the acurin A core structure with a heptaketide backbone produced by acrA covalently fused to a L-serine by acrB. After the formation of the PK-NRP hybrid product, it is detached from acrB by reductive release to set up the formation of the lactam ring by aldol condensation. The hydrolyase acrC then catalyzes water loss to generate a double bond in the ring. This double bond is probably reduced, which is followed by three oxidations at C-22 to generate the carboxylic acid moiety, involving probably the FAD-binding monooxygenase acrE and the cytochrome P450 monooxygenases acrD and acrF. Finally, a last methylation step performed by the O-methyltransferase acrG leads to the production of acurin A. This chain is Hydrolase acrC, found in Aspergillus aculeatus (strain ATCC 16872 / CBS 172.66 / WB 5094).